Consider the following 2412-residue polypeptide: Centrosomal protein of 295 kDa (2412 aa).

Residues 1 to 540 (MKRKGMNTKL…KQADQPEVCC (540 aa)) form a necessary for centriole targeting and microtubule association region. S13 carries the post-translational modification Phosphoserine. 5 coiled-coil regions span residues 63-84 (AEEL…LEKL), 114-134 (AERK…QKNQ), 209-273 (DAHL…DLAR), 489-535 (RRKQ…QADQ), and 563-592 (HQLL…VLKE). Disordered regions lie at residues 600–641 (SALV…YQPV) and 739–762 (LDSQ…PSPF). S634 bears the Phosphoserine mark. Residues 739 to 757 (LDSQQISSEDSENISSKPS) show a composition bias toward polar residues. The stretch at 811–841 (AQQGDLRFLQEQLELQKKVLQARQEAREKLL) forms a coiled coil. 4 disordered regions span residues 871–891 (SASA…ATVS), 973–1005 (DTQS…QDGS), 1158–1178 (LSSP…SVRS), and 1216–1240 (WVDT…QQTG). Polar residues-rich tracts occupy residues 993-1005 (PSQS…QDGS), 1158-1176 (LSSP…SVSV), and 1224-1240 (FQSS…QQTG). Coiled coils occupy residues 1300-1327 (QQDS…EAHE) and 1448-1493 (QHDD…SKQI). At S1573 the chain carries Phosphoserine. 4 disordered regions span residues 1820–1895 (LAHD…LSSV), 1916–1937 (ESFS…EETD), 2028–2048 (DLSS…SESS), and 2089–2111 (TEGS…SQHA). Residues 1836 to 1868 (SKSHDDNAEAVKVKKSDVEDHAVLSHAVSKEEA) show a composition bias toward basic and acidic residues. The span at 1885 to 1895 (QEISQEPLSSV) shows a compositional bias: polar residues. Over residues 1921–1935 (QTEHLEQESTNKQEE) the composition is skewed to basic and acidic residues. Polar residues predominate over residues 2089 to 2108 (TEGSEQSFQQLRPEFSSQES). Residues 2367 to 2412 (SLQEAFMTRQTLTERSYQRQREIWNKTRLPQTKVSKEKLPTGCTGS) are ALMS motif.

As to quaternary structure, interacts (via ALMS motif) with microtubules; this interaction is direct.

It is found in the cytoplasm. It localises to the cytoskeleton. The protein resides in the microtubule organizing center. The protein localises to the centrosome. Its subcellular location is the centriole. It is found in the spindle. Its function is as follows. Centriole-enriched microtubule-binding protein involved in centriole biogenesis. Essential for the generation of the distal portion of new-born centrioles in a CPAP- and CEP120-mediated elongation dependent manner during the cell cycle S/G2 phase after formation of the initiating cartwheel structure. Required for the recruitment of centriolar proteins, such as POC1B, POC5 and CEP135, into the distal portion of centrioles. Also required for centriole-to-centrosome conversion during mitotic progression, but is dispensable for cartwheel removal or centriole disengagement. Binds to and stabilizes centriolar microtubule. May be involved in ciliogenesis. In Mus musculus (Mouse), this protein is Centrosomal protein of 295 kDa.